The primary structure comprises 396 residues: Tryptophan synthase beta chain (396 aa).

Lys88 bears the N6-(pyridoxal phosphate)lysine mark.

Belongs to the TrpB family. Tetramer of two alpha and two beta chains. Pyridoxal 5'-phosphate is required as a cofactor.

It carries out the reaction (1S,2R)-1-C-(indol-3-yl)glycerol 3-phosphate + L-serine = D-glyceraldehyde 3-phosphate + L-tryptophan + H2O. It functions in the pathway amino-acid biosynthesis; L-tryptophan biosynthesis; L-tryptophan from chorismate: step 5/5. Functionally, the beta subunit is responsible for the synthesis of L-tryptophan from indole and L-serine. The polypeptide is Tryptophan synthase beta chain (Shewanella sp. (strain ANA-3)).